Consider the following 761-residue polypeptide: Membrane protein of ER body-like protein (761 aa).

2 disordered regions span residues 1-85 and 120-162; these read MGSA…GEHT and GSES…RSRE. Acidic residues predominate over residues 22–31; that stretch reads EVEEDDEQIV. Over residues 48 to 65 the composition is skewed to low complexity; that stretch reads VDSSTITNTSSSSSSSFS. Residues 74–85 are compositionally biased toward basic and acidic residues; it reads PDFHSNGDGEHT. Residues 136 to 154 show a composition bias toward polar residues; that stretch reads TADLNGEQTQLEPENGSTS. Residues 186–206 are a coiled coil; it reads IEEEVDFEDVEYHDVENMMDK. Disordered stretches follow at residues 338–374 and 416–448; these read SSSVLEANPPPRESIVPVVNPSRGNLSPMRKDTTGSA and QTQQKIDNDDSSTADGNHTSDKGRLSPIQPSHG. Residues 416–432 are compositionally biased toward polar residues; the sequence is QTQQKIDNDDSSTADGN. 5 helical membrane passes run 549 to 569, 573 to 593, 640 to 660, 670 to 690, and 702 to 722; these read IVYGGLLEAITSLGVISSAAG, SMLNILVLGLANLLGGLILII, VAILSFIITGILPPVVYYFSF, VASVFGASLFCIVLLAIAKAH, and ILYYGSIAVSVSGISYVVGNF.

This sequence belongs to the CCC1 family.

Its subcellular location is the endoplasmic reticulum membrane. Functionally, not essential for the accumulation of ER body components, including PYK10. This Arabidopsis thaliana (Mouse-ear cress) protein is Membrane protein of ER body-like protein (MEBL).